The following is a 41-amino-acid chain: Large ribosomal subunit protein bL36 (41 aa).

Belongs to the bacterial ribosomal protein bL36 family.

The polypeptide is Large ribosomal subunit protein bL36 (Bartonella quintana (strain Toulouse) (Rochalimaea quintana)).